Reading from the N-terminus, the 237-residue chain is Demethylmenaquinone methyltransferase (237 aa).

S-adenosyl-L-methionine-binding positions include threonine 58, aspartate 79, and 106 to 107; that span reads NA.

This sequence belongs to the class I-like SAM-binding methyltransferase superfamily. MenG/UbiE family.

It catalyses the reaction a 2-demethylmenaquinol + S-adenosyl-L-methionine = a menaquinol + S-adenosyl-L-homocysteine + H(+). The protein operates within quinol/quinone metabolism; menaquinone biosynthesis; menaquinol from 1,4-dihydroxy-2-naphthoate: step 2/2. In terms of biological role, methyltransferase required for the conversion of demethylmenaquinol (DMKH2) to menaquinol (MKH2). In Bacillus cereus (strain ATCC 10987 / NRS 248), this protein is Demethylmenaquinone methyltransferase.